We begin with the raw amino-acid sequence, 840 residues long: MNQEVKNKIFSILKITFATALFIFVVITLYRELSGINFKDTLVEFSKINRMSLVLLFIGGGASLVILSMYDVILSRALKMDISLGKVLRVSYIINALNAIVGFGGFIGAGVRAMVYKNYTHDKKKLVHFISLILISMLTGLSLLSLLIVFHVFDASLILNKITWVRWVLYAVSLFLPLFIIYSMVRPPDKNNRYVGLYCTLVSCVEWLAAAVVLYFCGVIVDVHVSFMSFIAIFIIAALSGLVSFIPGGFGAFDLVVLLGFKTLGVPEEKVLLMLLLYRFAYYFVPVIIALILSSFEFGTSAKKYIEGSKYFIPAKDVTSFLMSYQKDIIAKIPSLSLAILVFFTSMIFFVNNLTIVYDALYDGNHLTYYLLLAIHTSACLLLLLNVVGIYKQSRRAIIYAMISIILIIVATLFTYASYILITWLVIIFALLIVAFRRARRLKRPIRMRNLVAMLLFSIFILYINHIFIAGTFYALDVYTIEMHTSVLKYYFWITILIIAIIVGAIAWLFDYQFSKVRISSNIEECEEIIDQYGGNYLSHLIYSGDKQFFTNEDKNAFLMYRYKASSLVVLGDPIGDENAFDELLEAFYNYAEYLGYDVIFYQVTDQHMPLYHNFGNQFFKLGEEAIIDLTQFSTSGKKRRGFRATLNKFDELNISFEIIEPPFSTEFINELQHVSDLWLDNRQEMHFSVGQFNETYLSKAPIGVMRNENNEVIAFCSLMPTYFNDAISVDLIRWLPELDLPLMDGLYLHMLLWSKEQGYTKFNMGMATLSNVGQLHYSYLRERLAGRVFEHFNGLYRFQGLRRYKSKYNPNWEPRFLVYRKDNSLWESLSKVMRVIRHK.

The Cytoplasmic segment spans residues 1 to 8 (MNQEVKNK). A helical transmembrane segment spans residues 9–29 (IFSILKITFATALFIFVVITL). The Extracellular segment spans residues 30–52 (YRELSGINFKDTLVEFSKINRMS). The helical transmembrane segment at 53–73 (LVLLFIGGGASLVILSMYDVI) threads the bilayer. Over 74-89 (LSRALKMDISLGKVLR) the chain is Cytoplasmic. A helical transmembrane segment spans residues 90–110 (VSYIINALNAIVGFGGFIGAG). Topologically, residues 111 to 128 (VRAMVYKNYTHDKKKLVH) are extracellular. A helical membrane pass occupies residues 129–149 (FISLILISMLTGLSLLSLLIV). Residues 150 to 161 (FHVFDASLILNK) are Cytoplasmic-facing. Residues 162 to 182 (ITWVRWVLYAVSLFLPLFIIY) form a helical membrane-spanning segment. Residues 183–200 (SMVRPPDKNNRYVGLYCT) lie on the Extracellular side of the membrane. The chain crosses the membrane as a helical span at residues 201–221 (LVSCVEWLAAAVVLYFCGVIV). The Cytoplasmic segment spans residues 222–229 (DVHVSFMS). The helical transmembrane segment at 230–250 (FIAIFIIAALSGLVSFIPGGF) threads the bilayer. Topologically, residues 251–271 (GAFDLVVLLGFKTLGVPEEKV) are extracellular. The helical transmembrane segment at 272–292 (LLMLLLYRFAYYFVPVIIALI) threads the bilayer. Residues 293–337 (LSSFEFGTSAKKYIEGSKYFIPAKDVTSFLMSYQKDIIAKIPSLS) are Cytoplasmic-facing. Residues 338-358 (LAILVFFTSMIFFVNNLTIVY) form a helical membrane-spanning segment. At 359–369 (DALYDGNHLTY) the chain is on the extracellular side. A helical transmembrane segment spans residues 370–390 (YLLLAIHTSACLLLLLNVVGI). Over 391–394 (YKQS) the chain is Cytoplasmic. 2 helical membrane passes run 395–415 (RRAI…TLFT) and 416–436 (YASY…IVAF). Over 437–450 (RRARRLKRPIRMRN) the chain is Cytoplasmic. A helical transmembrane segment spans residues 451 to 471 (LVAMLLFSIFILYINHIFIAG). Residues 472–489 (TFYALDVYTIEMHTSVLK) lie on the Extracellular side of the membrane. A helical membrane pass occupies residues 490 to 510 (YYFWITILIIAIIVGAIAWLF). The Cytoplasmic portion of the chain corresponds to 511–840 (DYQFSKVRIS…SKVMRVIRHK (330 aa)).

It belongs to the LPG synthase family.

It is found in the cell membrane. The catalysed reaction is L-lysyl-tRNA(Lys) + a 1,2-diacyl-sn-glycero-3-phospho-(1'-sn-glycerol) = a 1,2-diacyl-sn-glycero-3-phospho-1'-(3'-O-L-lysyl)-sn-glycerol + tRNA(Lys). Its function is as follows. Catalyzes the transfer of a lysyl group from L-lysyl-tRNA(Lys) to membrane-bound phosphatidylglycerol (PG), which produces lysylphosphatidylglycerol (LPG), a major component of the bacterial membrane with a positive net charge. LPG synthesis contributes to bacterial virulence as it is involved in the resistance mechanism against cationic antimicrobial peptides (CAMP) produces by the host's immune system (defensins, cathelicidins) and by the competing microorganisms (bacteriocins). In fact, the modification of anionic phosphatidylglycerol with positively charged L-lysine results in repulsion of the peptides. The sequence is that of Phosphatidylglycerol lysyltransferase (mprF) from Staphylococcus aureus (strain MRSA252).